The primary structure comprises 895 residues: Zinc finger protein 281 (895 aa).

Disordered regions lie at residues 1–44 and 63–113; these read MKIG…EMEP and FTRP…AFPS. Residue Lys2 forms a Glycyl lysine isopeptide (Lys-Gly) (interchain with G-Cter in SUMO2) linkage. Gly residues predominate over residues 7-36; the sequence is FLSGGGGTGSSGGSGSGGGGSGGGGGGGSS. Glycyl lysine isopeptide (Lys-Gly) (interchain with G-Cter in SUMO2) cross-links involve residues Arg65, Lys101, and Lys128. Composition is skewed to basic and acidic residues over residues 130–140 and 202–218; these read EKPADPEEQQS and RTDD…DTNV. Disordered stretches follow at residues 130-149 and 183-253; these read EKPA…HHHY and HVQQ…EGAI. Glycyl lysine isopeptide (Lys-Gly) (interchain with G-Cter in SUMO2) cross-links involve residues Lys213, Lys219, Lys225, Lys232, Lys242, and Lys259. 3 C2H2-type zinc fingers span residues 261–283, 289–311, and 317–339; these read HICD…VLIH, FQCS…EKIH, and FGCD…KRTH. Glycyl lysine isopeptide (Lys-Gly) (interchain with G-Cter in SUMO2) cross-links involve residues Lys301 and Lys325. The C2H2-type 4; atypical zinc finger occupies 345-367; it reads YKCDTCQQYFSRTDRLLKHRRTC. Residue Lys373 forms a Glycyl lysine isopeptide (Lys-Gly) (interchain with G-Cter in SUMO2) linkage. The disordered stretch occupies residues 377-427; the sequence is SAEPGSSNHTNMGNLAVLSQGNTSSSRRKTKSKSIAIENKEQKTGKTNESQ. A compositionally biased stretch (polar residues) spans 379-398; that stretch reads EPGSSNHTNMGNLAVLSQGN. The residue at position 395 (Ser395) is a Phosphoserine. Glycyl lysine isopeptide (Lys-Gly) (interchain with G-Cter in SUMO2) cross-links involve residues Lys409, Lys416, Lys460, and Lys477. Ser484 bears the Phosphoserine mark. Residues Lys493, Lys498, Lys539, Lys599, Lys617, and Lys622 each participate in a glycyl lysine isopeptide (Lys-Gly) (interchain with G-Cter in SUMO2) cross-link. The tract at residues 638 to 660 is disordered; the sequence is SGEHSELVQEENLSPGTQTPSND. Over residues 648–660 the composition is skewed to polar residues; it reads ENLSPGTQTPSND. A Phosphoserine modification is found at Ser651. Glycyl lysine isopeptide (Lys-Gly) (interchain with G-Cter in SUMO2) cross-links involve residues Lys661 and Lys670. Residues 778 to 789 show a composition bias toward polar residues; the sequence is SSAFQSSSQKLT. Residues 778 to 817 form a disordered region; the sequence is SSAFQSSSQKLTSQKEQKNLESSTGFQIPSQELASQIDPQ. Ser785 carries the phosphoserine modification. Residues Lys787, Lys792, and Lys795 each participate in a glycyl lysine isopeptide (Lys-Gly) (interchain with G-Cter in SUMO2) cross-link. Residues 797–815 are compositionally biased toward polar residues; the sequence is LESSTGFQIPSQELASQID. The residue at position 807 (Ser807) is a Phosphoserine. Glycyl lysine isopeptide (Lys-Gly) (interchain with G-Cter in SUMO2) cross-links involve residues Lys818 and Lys840. Thr888 is subject to Phosphothreonine.

This sequence belongs to the krueppel C2H2-type zinc-finger protein family.

It is found in the nucleus. Functionally, transcription repressor that plays a role in regulation of embryonic stem cells (ESCs) differentiation. Required for ESCs differentiation and acts by mediating autorepression of NANOG in ESCs: binds to the NANOG promoter and promotes association of NANOG protein to its own promoter and recruits the NuRD complex, which deacetylates histones. Not required for establishement and maintenance of ESCs. Represses the transcription of a number of genes including GAST, ODC1 and VIM. Binds to the G-rich box in the enhancer region of these genes. The sequence is that of Zinc finger protein 281 (ZNF281) from Homo sapiens (Human).